Here is a 673-residue protein sequence, read N- to C-terminus: DNA ligase (673 aa).

NAD(+) is bound by residues 33–37 (DYEYD), 82–83 (SL), and Glu113. The active-site N6-AMP-lysine intermediate is the Lys115. The NAD(+) site is built by Arg136, Glu170, Lys285, and Lys309. Residues Cys403, Cys406, Cys421, and Cys426 each contribute to the Zn(2+) site. The BRCT domain occupies 583-672 (AKSDILKGYT…SREEAEKILM (90 aa)).

Belongs to the NAD-dependent DNA ligase family. LigA subfamily. Requires Mg(2+) as cofactor. Mn(2+) is required as a cofactor.

It catalyses the reaction NAD(+) + (deoxyribonucleotide)n-3'-hydroxyl + 5'-phospho-(deoxyribonucleotide)m = (deoxyribonucleotide)n+m + AMP + beta-nicotinamide D-nucleotide.. In terms of biological role, DNA ligase that catalyzes the formation of phosphodiester linkages between 5'-phosphoryl and 3'-hydroxyl groups in double-stranded DNA using NAD as a coenzyme and as the energy source for the reaction. It is essential for DNA replication and repair of damaged DNA. The chain is DNA ligase from Caldicellulosiruptor bescii (strain ATCC BAA-1888 / DSM 6725 / KCTC 15123 / Z-1320) (Anaerocellum thermophilum).